We begin with the raw amino-acid sequence, 361 residues long: UPF0283 membrane protein Smed_1530 (361 aa).

The interval 1–40 (MNDDSNGRRRRPAAFPVGTEDATSRELEQTPRRAPGSFSD) is disordered. Residues 22–31 (ATSRELEQTP) show a composition bias toward basic and acidic residues. Transmembrane regions (helical) follow at residues 76–96 (FGKIAAGAFGILISLAVGLWV) and 109–129 (WLGYGAVAVVAIGAAAFLIVV).

It belongs to the UPF0283 family.

It localises to the cell inner membrane. In Sinorhizobium medicae (strain WSM419) (Ensifer medicae), this protein is UPF0283 membrane protein Smed_1530.